An 83-amino-acid chain; its full sequence is MTINFDTATQTLEAEGLRCPEPVMMVRKTIRKMEDGETLLIKADDPSTTRDIPSFCRFMDHELIAEDTDSLPYRYLIRKGLSK.

The active-site Cysteine persulfide intermediate is the Cys-19.

The protein belongs to the sulfur carrier protein TusA family.

Its subcellular location is the cytoplasm. Functionally, sulfur carrier protein which probably makes part of a sulfur-relay system. The polypeptide is Sulfur carrier protein TusA (Aliivibrio fischeri (strain ATCC 700601 / ES114) (Vibrio fischeri)).